The following is a 491-amino-acid chain: Protein nucleotidyltransferase YdiU (491 aa).

Positions 94, 96, 97, 117, 129, 130, 180, and 187 each coordinate ATP. Aspartate 256 functions as the Proton acceptor in the catalytic mechanism. 2 residues coordinate Mg(2+): asparagine 257 and aspartate 266. Aspartate 266 is an ATP binding site.

It belongs to the SELO family. It depends on Mg(2+) as a cofactor. Mn(2+) serves as cofactor.

It carries out the reaction L-seryl-[protein] + ATP = 3-O-(5'-adenylyl)-L-seryl-[protein] + diphosphate. The catalysed reaction is L-threonyl-[protein] + ATP = 3-O-(5'-adenylyl)-L-threonyl-[protein] + diphosphate. It catalyses the reaction L-tyrosyl-[protein] + ATP = O-(5'-adenylyl)-L-tyrosyl-[protein] + diphosphate. The enzyme catalyses L-histidyl-[protein] + UTP = N(tele)-(5'-uridylyl)-L-histidyl-[protein] + diphosphate. It carries out the reaction L-seryl-[protein] + UTP = O-(5'-uridylyl)-L-seryl-[protein] + diphosphate. The catalysed reaction is L-tyrosyl-[protein] + UTP = O-(5'-uridylyl)-L-tyrosyl-[protein] + diphosphate. Functionally, nucleotidyltransferase involved in the post-translational modification of proteins. It can catalyze the addition of adenosine monophosphate (AMP) or uridine monophosphate (UMP) to a protein, resulting in modifications known as AMPylation and UMPylation. The protein is Protein nucleotidyltransferase YdiU of Clostridium botulinum (strain Okra / Type B1).